The following is a 426-amino-acid chain: Phosphomethylpyrimidine synthase (426 aa).

Substrate-binding positions include Met94, Tyr123, His162, 184 to 186 (SRG), 225 to 228 (NGMR), and Glu264. Residue His268 participates in Zn(2+) binding. Tyr291 serves as a coordination point for substrate. Zn(2+) is bound at residue His332. Positions 406, 409, and 413 each coordinate [4Fe-4S] cluster.

The protein belongs to the ThiC family. [4Fe-4S] cluster serves as cofactor.

The catalysed reaction is 5-amino-1-(5-phospho-beta-D-ribosyl)imidazole + S-adenosyl-L-methionine = 4-amino-2-methyl-5-(phosphooxymethyl)pyrimidine + CO + 5'-deoxyadenosine + formate + L-methionine + 3 H(+). Its pathway is cofactor biosynthesis; thiamine diphosphate biosynthesis. Functionally, catalyzes the synthesis of the hydroxymethylpyrimidine phosphate (HMP-P) moiety of thiamine from aminoimidazole ribotide (AIR) in a radical S-adenosyl-L-methionine (SAM)-dependent reaction. This Methanospirillum hungatei JF-1 (strain ATCC 27890 / DSM 864 / NBRC 100397 / JF-1) protein is Phosphomethylpyrimidine synthase.